The following is a 644-amino-acid chain: Threonine--tRNA ligase (644 aa).

A TGS domain is found at 1-62 (MSFSVTLPDG…DSDVEIAIIT (62 aa)). The segment at 240-538 (DHRTIGRDLD…LTEIYKGAFP (299 aa)) is catalytic. Residues Cys334, His385, and His515 each coordinate Zn(2+).

Belongs to the class-II aminoacyl-tRNA synthetase family. In terms of assembly, homodimer. It depends on Zn(2+) as a cofactor.

The protein localises to the cytoplasm. It catalyses the reaction tRNA(Thr) + L-threonine + ATP = L-threonyl-tRNA(Thr) + AMP + diphosphate + H(+). Its function is as follows. Catalyzes the attachment of threonine to tRNA(Thr) in a two-step reaction: L-threonine is first activated by ATP to form Thr-AMP and then transferred to the acceptor end of tRNA(Thr). Also edits incorrectly charged L-seryl-tRNA(Thr). In Lactobacillus acidophilus (strain ATCC 700396 / NCK56 / N2 / NCFM), this protein is Threonine--tRNA ligase.